The primary structure comprises 1275 residues: Histone-lysine N-methyltransferase PRDM16 (1275 aa).

Residues 1–10 show a composition bias toward basic residues; that stretch reads MRSKARARKL. Residues 1 to 66 form a disordered region; sequence MRSKARARKL…SEDFTPKEGS (66 aa). The SET domain maps to 82-211; sequence PDFELRESSI…PGEELLVHVK (130 aa). A C2H2-type 1; degenerate zinc finger spans residues 230 to 255; it reads FRCDECDELFQCRLDLRRHKKYACSS. C2H2-type zinc fingers lie at residues 282–304, 310–332, 338–361, 367–389, and 395–417; these read HECKDCERMFPNKYSLEQHMIVH, YKCDQCPKAFNWKSNLIRHQMSH, FECENCVKVFTDPSNLQRHIRSQH, HACPDCGKTFATSSGLKQHKHIH, and FICEVCHKSYTQFSNLCRHKRMH. Residues 424-446 form a C2H2-type 7; atypical zinc finger; it reads IKCKDCGQMFSTTSSLNKHRRFC. Disordered stretches follow at residues 592 to 658 and 789 to 838; these read VKNR…VPPG and APKV…GVSE. Positions 610-625 are enriched in low complexity; that stretch reads TTTGTDLDTTTGTGSD. Composition is skewed to basic and acidic residues over residues 631–648 and 821–835; these read DSDRDKGKDKGKPVESKP and REPRKNHVYGERKPG. Residues 680–1038 are interaction with CTBP1, CTBP2 and ZNF516; the sequence is EEQLLTASGA…KHEHEGAPVS (359 aa). A mediates interaction with SKI and regulation of TGF-beta signaling region spans residues 740-1275; that stretch reads PFTDRALAHN…SGAFNPINHL (536 aa). C2H2-type zinc fingers lie at residues 951-973, 979-1002, and 1008-1030; these read YTCRYCGKIFPRSANLTRHLRTH, YRCKYCDRSFSISSNLQRHVRNIH, and FKCHLCNRCFGQQTNLDRHLKKH. Disordered regions lie at residues 1027-1065 and 1084-1169; these read LKKHEHEGAPVSQHSGVLTNHLGTSASSPTSESDNHALL and EMNQ…MGFD. Residues 1038–1058 show a composition bias toward polar residues; sequence SQHSGVLTNHLGTSASSPTSE. Positions 1117 to 1133 are enriched in acidic residues; the sequence is DVEEEEEEELEEEDDDS.

Belongs to the PRDM16 family. As to quaternary structure, interacts with CEBPA, CEBPB and CEBPD; the interaction is direct. Interacts with PPARG and PPARA; controls brown adipocytes. Interacts with CTBP1 and CTBP2; represses the expression of WAT-specific genes. Interacts with PPARGC1A and PPARGC1B; interaction with PPARGC1A or PPARGC1B activates the transcription of BAT-specific gene. Interacts with HDAC1, SKI and SMAD2; the interaction with SKI promotes the recruitment of SMAD3-HDAC1 complex on the promoter of TGF-beta target genes. Interacts with ZNF516; the interaction is direct and may play a role in the transcription of brown adipose tissue-specific gene. Enriched in BAT compared to WAT. Detected in heart, lung, kidney and brain. Expressed in nuclei of cardiomyocytes.

Its subcellular location is the nucleus. The protein resides in the cytoplasm. The catalysed reaction is L-lysyl(9)-[histone H3] + S-adenosyl-L-methionine = N(6)-methyl-L-lysyl(9)-[histone H3] + S-adenosyl-L-homocysteine + H(+). Binds DNA and functions as a transcriptional regulator. Displays histone methyltransferase activity and monomethylates 'Lys-9' of histone H3 (H3K9me1) in vitro. Probably catalyzes the monomethylation of free histone H3 in the cytoplasm which is then transported to the nucleus and incorporated into nucleosomes where SUV39H methyltransferases use it as a substrate to catalyze histone H3 'Lys-9' trimethylation. Likely to be one of the primary histone methyltransferases along with MECOM/PRDM3 that direct cytoplasmic H3K9me1 methylation. Functions in the differentiation of brown adipose tissue (BAT) which is specialized in dissipating chemical energy in the form of heat in response to cold or excess feeding while white adipose tissue (WAT) is specialized in the storage of excess energy and the control of systemic metabolism. Together with CEBPB, regulates the differentiation of myoblastic precursors into brown adipose cells. Functions as a repressor of TGF-beta signaling. This is Histone-lysine N-methyltransferase PRDM16 from Mus musculus (Mouse).